The chain runs to 341 residues: Cell wall mannoprotein PIR1 (341 aa).

The N-terminal stretch at 1–18 (MQYKKSLVASALVATSLA) is a signal peptide. Residues 19 to 63 (AYAPKDPWSTLTPSATYKGGITDYSSTFGIAVEPIATTASSKAKR) constitute a propeptide that is removed on maturation. PIR1/2/3 repeat units lie at residues 64–82 (AAAISQIGDGQIQATTKTT), 83–101 (AAAVSQIGDGQIQATTKTK), 102–120 (AAAVSQIGDGQIQATTKTT), 126–144 (AAAVSQIGDGQIQATTKTK), 145–163 (AAAVSQIGDGQIQATTKTT), 164–182 (AAAVSQIGDGQIQATTKTT), 183–201 (AAAVSQIGDGQIQATTNTT), and 202–220 (VAPVSQITDGQIQATTLTS).

Belongs to the PIR protein family. Covalently linked to beta-1,3-glucan of the inner cell wall layer via an alkali-sensitive ester linkage between the gamma-carboxyl group of glutamic acids, arising from specific glutamines within the PIR1/2/3 repeats, and hydroxyl groups of glucoses of beta-1,3-glucan chains. Post-translationally, O-glycosylated. Extensively O-mannosylated.

It is found in the secreted. Its subcellular location is the cell wall. In terms of biological role, component of the outer cell wall layer. Required for stability of the cell wall and for optimal growth. Required for resistance against several antifungal and cell wall-perturbing agents and for tolerance to heat shock. The sequence is that of Cell wall mannoprotein PIR1 (PIR1) from Saccharomyces cerevisiae (strain YJM789) (Baker's yeast).